A 263-amino-acid chain; its full sequence is Ubiquinone/menaquinone biosynthesis C-methyltransferase UbiE (263 aa).

3 residues coordinate S-adenosyl-L-methionine: Thr86, Asp107, and Ser152.

It belongs to the class I-like SAM-binding methyltransferase superfamily. MenG/UbiE family.

The enzyme catalyses a 2-demethylmenaquinol + S-adenosyl-L-methionine = a menaquinol + S-adenosyl-L-homocysteine + H(+). It catalyses the reaction a 2-methoxy-6-(all-trans-polyprenyl)benzene-1,4-diol + S-adenosyl-L-methionine = a 5-methoxy-2-methyl-3-(all-trans-polyprenyl)benzene-1,4-diol + S-adenosyl-L-homocysteine + H(+). It participates in quinol/quinone metabolism; menaquinone biosynthesis; menaquinol from 1,4-dihydroxy-2-naphthoate: step 2/2. The protein operates within cofactor biosynthesis; ubiquinone biosynthesis. Its function is as follows. Methyltransferase required for the conversion of demethylmenaquinol (DMKH2) to menaquinol (MKH2) and the conversion of 2-polyprenyl-6-methoxy-1,4-benzoquinol (DDMQH2) to 2-polyprenyl-3-methyl-6-methoxy-1,4-benzoquinol (DMQH2). The sequence is that of Ubiquinone/menaquinone biosynthesis C-methyltransferase UbiE from Brucella anthropi (strain ATCC 49188 / DSM 6882 / CCUG 24695 / JCM 21032 / LMG 3331 / NBRC 15819 / NCTC 12168 / Alc 37) (Ochrobactrum anthropi).